Here is a 185-residue protein sequence, read N- to C-terminus: Deoxyuridine 5'-triphosphate nucleotidohydrolase (185 aa).

The disordered stretch occupies residues 1–23; sequence MSHLQAHMQRNNKESHSLSPFSQ. Residues 95–97, N108, 112–114, and K122 each bind substrate; these read RSG and TID. The segment at 160-185 is disordered; that stretch reads DQKDSSQTPSNEGSRGADGFGSTGHD. The span at 175 to 185 shows a compositional bias: gly residues; that stretch reads GADGFGSTGHD.

It belongs to the dUTPase family. The cofactor is Mg(2+).

It catalyses the reaction dUTP + H2O = dUMP + diphosphate + H(+). Its pathway is pyrimidine metabolism; dUMP biosynthesis; dUMP from dCTP (dUTP route): step 2/2. Its function is as follows. This enzyme is involved in nucleotide metabolism: it produces dUMP, the immediate precursor of thymidine nucleotides and it decreases the intracellular concentration of dUTP so that uracil cannot be incorporated into DNA. The chain is Deoxyuridine 5'-triphosphate nucleotidohydrolase from Bartonella quintana (strain Toulouse) (Rochalimaea quintana).